Here is a 477-residue protein sequence, read N- to C-terminus: MAAQSGRVTQVIGAVVDVQFEGHLPAILNSLETKNGGNRLVLEVAQHLGESTVRTIAMDTTEGLVRGQEVTDTGSPIRVPVGEGTLGRIINVIGEPIDEAGPVKSEGLRAIHQEAPTYTDQSTEAEILVTGIKVVDLLAPYAKGGKIGLFGGAGVGKTVLIQELINNVAKAHGGYSVFAGVGERTREGNDLYHEFIESKVNADPHNPDPSVKSKCALVFGQMNEPPGARARVALTGLTIAEDFRDKGQDVLFFVDNIFRFTQAGSEVSALLGRIPSAVGYQPTLATDMGALQERITTTQKGSITSVQAIYVPADDLTDPAPATSFAHLDATTTLSRSIAEKGIYPAVDPLDSTSRMLSPLVVGEEHYAVARQVQQVLQRYKALQDIIAILGMDELSEEDKLTVARARKVERFMSQPFHVAEIFTGSPGKFVDLADTIKGFKGLVEGKYDHLPEAAFYMVGTIEEAVEKGKKLAAEAA.

151-158 contributes to the ATP binding site; that stretch reads GGAGVGKT.

It belongs to the ATPase alpha/beta chains family. F-type ATPases have 2 components, CF(1) - the catalytic core - and CF(0) - the membrane proton channel. CF(1) has five subunits: alpha(3), beta(3), gamma(1), delta(1), epsilon(1). CF(0) has three main subunits: a(1), b(2) and c(9-12). The alpha and beta chains form an alternating ring which encloses part of the gamma chain. CF(1) is attached to CF(0) by a central stalk formed by the gamma and epsilon chains, while a peripheral stalk is formed by the delta and b chains.

The protein localises to the cell inner membrane. It carries out the reaction ATP + H2O + 4 H(+)(in) = ADP + phosphate + 5 H(+)(out). Its function is as follows. Produces ATP from ADP in the presence of a proton gradient across the membrane. The catalytic sites are hosted primarily by the beta subunits. In Bradyrhizobium diazoefficiens (strain JCM 10833 / BCRC 13528 / IAM 13628 / NBRC 14792 / USDA 110), this protein is ATP synthase subunit beta.